Consider the following 329-residue polypeptide: SLAM family member 5 (329 aa).

Positions 1-21 are cleaved as a signal peptide; that stretch reads MAQRHLWIWFLCLQTWSEAAG. Residues 22–221 are Extracellular-facing; the sequence is KDADPMVMNG…TPSFHPRHAV (200 aa). The Ig-like V-type domain maps to 26 to 129; sequence PMVMNGILGE…IYYLHIYRRL (104 aa). The region spanning 132–206 is the Ig-like C2-type domain; that stretch reads PKITQSLISS…SNSSDSVTVQ (75 aa). Asn147 carries N-linked (GlcNAc...) asparagine glycosylation. A disulfide bridge links Cys152 with Cys190. The chain crosses the membrane as a helical span at residues 222–242; the sequence is LPGGLAVLFLLILIPMLAFLF. At 243–329 the chain is on the cytoplasmic side; the sequence is RLYKRRRDRI…PKALGNEIVV (87 aa). The ITSM 1 signature appears at 263–268; the sequence is TVYAVV. Tyr265 carries the post-translational modification Phosphotyrosine. A Phosphotyrosine; by LYN modification is found at Tyr280. The ITSM 2 motif lies at 298 to 303; it reads TIYSSV. At Tyr300 the chain carries Phosphotyrosine.

Homodimer; via its extracellular domain. Forms a head to tail dimer with a CD48 molecule from another cell. Interacts with SH2 domain-containing proteins SH2D1A/SAP and SH2D1B/EAT-2. Interacts with tyrosine-protein phosphatases PTPN6/SHP-1 and PTPN11/SHP-2 via its phosphorylated cytoplasmic domain, and this interaction is blocked by SH2D1A. In terms of processing, phosphorylated by tyrosine-protein kinase LCK on tyrosine residues following ligation induced by agonist monoclonal antibody. The association with SH2D1A/SAP is dependent of tyrosine phosphorylation of its cytoplasmic domain. Phosphorylated on Tyr-280 and Tyr-300 following platelet aggregation. Phosphorylated on tyrosine residues upon high affinity immunoglobulin epsilon receptor aggregation in mast cells. N-glycosylated. Predominantly expressed in hematopoietic tissues such as lymph node, spleen, thymus, and bone marrow. Detected also in lung.

It is found in the cell membrane. Its function is as follows. Self-ligand receptor of the signaling lymphocytic activation molecule (SLAM) family. SLAM receptors triggered by homo- or heterotypic cell-cell interactions are modulating the activation and differentiation of a wide variety of immune cells and thus are involved in the regulation and interconnection of both innate and adaptive immune response. Activities are controlled by presence or absence of small cytoplasmic adapter proteins, SH2D1A/SAP and/or SH2D1B/EAT-2. Can mediate natural killer (NK) cell cytotoxicity dependent on SH2D1A and SH2D1B. Increases proliferative responses of activated T-cells and SH2D1A/SAP does not seen be required for this process. Homophilic interactions enhance interferon gamma/IFNG secretion in lymphocytes and induce platelet stimulation via a SH2D1A/SAP-dependent pathway. May serve as a marker for hematopoietic progenitor cells. Required for a prolonged T-cell:B-cell contact, optimal T follicular helper function, and germinal center formation. In germinal centers involved in maintaining B cell tolerance and in preventing autoimmunity. In mast cells negatively regulates high affinity immunoglobulin epsilon receptor signaling; independent of SH2D1A and SH2D1B but implicating FES and PTPN6/SHP-1. In macrophages enhances LPS-induced MAPK phosphorylation and NF-kappaB activation and modulates LPS-induced cytokine secretion; involving ITSM 2. Positively regulates macroautophagy in primary dendritic cells via stabilization of IRF8; inhibits TRIM21-mediated proteasomal degradation of IRF8. The sequence is that of SLAM family member 5 (Cd84) from Mus musculus (Mouse).